Reading from the N-terminus, the 479-residue chain is Glycogen synthase (479 aa).

Lysine 15 contributes to the ADP-alpha-D-glucose binding site.

The protein belongs to the glycosyltransferase 1 family. Bacterial/plant glycogen synthase subfamily.

It carries out the reaction [(1-&gt;4)-alpha-D-glucosyl](n) + ADP-alpha-D-glucose = [(1-&gt;4)-alpha-D-glucosyl](n+1) + ADP + H(+). It participates in glycan biosynthesis; glycogen biosynthesis. Functionally, synthesizes alpha-1,4-glucan chains using ADP-glucose. The chain is Glycogen synthase from Clostridium novyi (strain NT).